A 278-amino-acid chain; its full sequence is Short-chain dehydrogenase/reductase eupG (278 aa).

Leu-19, Asp-71, and Asn-98 together coordinate NADP(+). The Proton donor role is filled by Ser-155. The NADP(+) site is built by Tyr-188, Lys-192, and Thr-223. Tyr-188 (proton acceptor) is an active-site residue. Catalysis depends on Lys-192, which acts as the Lowers pKa of active site Tyr.

This sequence belongs to the short-chain dehydrogenases/reductases (SDR) family.

It functions in the pathway secondary metabolite biosynthesis; terpenoid biosynthesis. Short-chain dehydrogenase/reductase; part of the gene cluster that mediates the biosynthesis of eupenifeldin, a bistropolone meroterpenoid that acts as an antitumor agent. The first step of eupenifeldin biosynthesis is the biosynthesis of 3-methylorcinaldehyde performed by the non-reducing polyketide synthase eupA. Oxidative dearomatization of 3-methylorcinaldehyde likely catalyzed by the FAD-dependent monooxygenase eupB is followed by oxidative ring expansion by the 2-oxoglutarate-dependent dioxygenase eupC to provide the first tropolone metabolite, tropolone stipitaldehyde. In parallel, generation of sesquiterpene alpha-humulene from farnesylpyrophosphate (FPP) is catalyzed by the terpene cyclase eupE. The cytochrome P450 monooxygenase eupD then hydroxylates humulene to humulenol. The putative Diels-Alderase eupF probably catalyzes the formation of the tropolone-humulene skeleton by linking humulenol and the polyketide moiety. The short-chain dehydrogenase/reductase eupG and the flavin-dependent monooxygenase eupH are also essential for eupenifeldin biosynthesis and are likely the additional decorating enzymes of the tropolone-humulene skeleton to produce final eupenifeldin or derivatives. This chain is Short-chain dehydrogenase/reductase eupG, found in Phoma sp.